The primary structure comprises 493 residues: Protein dml1 (493 aa).

Belongs to the misato family.

It is found in the mitochondrion. In terms of biological role, involved in the partitioning of the mitochondrial organelle and mitochondrial DNA (mtDNA) inheritance. The sequence is that of Protein dml1 (dml1) from Aspergillus oryzae (strain ATCC 42149 / RIB 40) (Yellow koji mold).